We begin with the raw amino-acid sequence, 459 residues long: Aluminum-activated malate transporter 1 (459 aa).

The Extracellular segment spans residues 1–52; it reads MDIDHGRESDGEMVGTIASCGLLLHSLLAGLGRRAAGFARKVGGAAREDPRR. Transmembrane regions (helical) follow at residues 53 to 73 and 74 to 94; these read VAHS…YFVT and PLFN…VVVM. Topologically, residues 95–108 are extracellular; it reads EYTVGATLSKGLNR. Residues 109 to 129 traverse the membrane as a helical segment; that stretch reads ALATLVAGCIAVGAHQLAELA. At 130–137 the chain is on the cytoplasmic side; sequence ERCGDQGE. Residues 138 to 158 form a helical membrane-spanning segment; it reads PIVLTVLVFFVASAATFLRFI. Residues 159 to 160 are Extracellular-facing; it reads PE. A helical membrane pass occupies residues 161–181; it reads IKAKYDYGVTIFILTFGLVAV. At 182–199 the chain is on the cytoplasmic side; it reads SSYRVEELIQLAHQRFYT. Residues 200 to 220 form a helical membrane-spanning segment; sequence IAVGVFICLCTTVFLFPVWAG. Residues 221–459 are Extracellular-facing; it reads EDVHKLASGN…DEPLPDVVIL (239 aa).

It belongs to the aromatic acid exporter (TC 2.A.85) family. In terms of tissue distribution, detected in root tips.

It localises to the cell membrane. Activated by external aluminum. The enhancement of malate transport is not due to alteration in the selectivity properties but is due to an increased anion permeability. Functionally, malate transporter critical for aluminum tolerance. Permeable to chloride, nitrate, sulfate and malate. This chain is Aluminum-activated malate transporter 1 (ALMT1), found in Triticum aestivum (Wheat).